We begin with the raw amino-acid sequence, 442 residues long: Protein phosphatase 2C 3 (442 aa).

The segment at 30–100 is disordered; sequence RFRMSPSEMN…VSISDGNSSV (71 aa). Acidic residues predominate over residues 79–90; sequence PEEESVSLEDSD. In terms of domain architecture, PPM-type phosphatase spans 120 to 433; sequence RYGVASVCGR…DNVSVVVIDL (314 aa). Mn(2+) is bound by residues Asp162, Gly163, and Asp339. Residues 363–401 form a disordered region; that stretch reads GRGRRRGETQTPGRRSEEEGKEEEEKVVGSRKNGKRGEI. A compositionally biased stretch (basic and acidic residues) spans 376-390; it reads RRSEEEGKEEEEKVV. Residue Asp424 coordinates Mn(2+).

Belongs to the PP2C family. Part of a K(+)-channel calcium-sensing kinase/phosphatase complex composed by a calcium sensor CBL (CBL1, CBL2, CBL3 or CBL9), a kinase CIPK (CIPK6, CIPK16 or CIPK23), a phosphatase PP2C (AIP1) and a K(+)-channel (AKT1). Interacts with AKT1 and CIPK23. Interacts with PYL8/RCAR3 in an abscisic acid-independent. Interacts with PYR1/RCAR11 in an abscisic acid-dependent manner. Requires Mg(2+) as cofactor. Mn(2+) is required as a cofactor. Expressed in shoot meristem, vascular tissues of cotyledons, and in primary roots surrounding the root meristem. Highly expressed in seeds.

It is found in the cell membrane. Its subcellular location is the cytoplasm. The protein resides in the nucleus. The catalysed reaction is O-phospho-L-seryl-[protein] + H2O = L-seryl-[protein] + phosphate. It carries out the reaction O-phospho-L-threonyl-[protein] + H2O = L-threonyl-[protein] + phosphate. Involved in the negative regulation of the K(+) potassium channel AKT1 by its dephosphorylation, antagonistically to CIPK proteins (e.g. CIPK23). Functions as a positive regulator of abscisic acid-mediated cell signaling during seedling growth. Involved in the regulation of seed dormancy. Acts as a negative regulator of seed dormancy by inhibiting abscisic signaling and subsequently activating gibberellic acid signaling. The protein is Protein phosphatase 2C 3 of Arabidopsis thaliana (Mouse-ear cress).